A 341-amino-acid chain; its full sequence is L-threonine 3-dehydrogenase (341 aa).

Position 38 (cysteine 38) interacts with Zn(2+). Residues threonine 40 and histidine 43 each act as charge relay system in the active site. Residues histidine 63, glutamate 64, cysteine 93, cysteine 96, cysteine 99, and cysteine 107 each coordinate Zn(2+). Residues isoleucine 175, aspartate 195, arginine 200, 262–264 (LGI), and 286–287 (IY) each bind NAD(+).

The protein belongs to the zinc-containing alcohol dehydrogenase family. Homotetramer. Zn(2+) is required as a cofactor.

The protein localises to the cytoplasm. The enzyme catalyses L-threonine + NAD(+) = (2S)-2-amino-3-oxobutanoate + NADH + H(+). The protein operates within amino-acid degradation; L-threonine degradation via oxydo-reductase pathway; glycine from L-threonine: step 1/2. Catalyzes the NAD(+)-dependent oxidation of L-threonine to 2-amino-3-ketobutyrate. The sequence is that of L-threonine 3-dehydrogenase from Shigella boydii serotype 4 (strain Sb227).